The following is a 287-amino-acid chain: 3-hydroxyanthranilate 3,4-dioxygenase (287 aa).

The tract at residues 1 to 163 is domain A (catalytic); the sequence is MTNQSLHVNI…SKENETGKPD (163 aa). An O2-binding site is contributed by Arg-46. 3 residues coordinate Fe cation: His-50, Glu-56, and His-94. A substrate-binding site is contributed by Glu-56. Substrate contacts are provided by Arg-98 and Glu-108. The segment at 164–180 is linker; it reads PANPIKPAPYPLNTMNV. The tract at residues 181-287 is domain B; it reads MTPFSFREWV…AQDPDRKRPY (107 aa).

The protein belongs to the 3-HAO family. Monomer. The cofactor is Fe(2+).

The protein localises to the cytoplasm. Its subcellular location is the cytosol. It catalyses the reaction 3-hydroxyanthranilate + O2 = (2Z,4Z)-2-amino-3-carboxymuconate 6-semialdehyde. It participates in cofactor biosynthesis; NAD(+) biosynthesis; quinolinate from L-kynurenine: step 3/3. Functionally, catalyzes the oxidative ring opening of 3-hydroxyanthranilate to 2-amino-3-carboxymuconate semialdehyde, which spontaneously cyclizes to quinolinate. The chain is 3-hydroxyanthranilate 3,4-dioxygenase (haao) from Danio rerio (Zebrafish).